Reading from the N-terminus, the 176-residue chain is Ribosome maturation factor RimM (176 aa).

The PRC barrel domain occupies 100-173 (KDEYHYHDLI…WLLINPPPGL (74 aa)).

It belongs to the RimM family. In terms of assembly, binds ribosomal protein uS19.

The protein resides in the cytoplasm. In terms of biological role, an accessory protein needed during the final step in the assembly of 30S ribosomal subunit, possibly for assembly of the head region. Essential for efficient processing of 16S rRNA. May be needed both before and after RbfA during the maturation of 16S rRNA. It has affinity for free ribosomal 30S subunits but not for 70S ribosomes. In Prochlorococcus marinus (strain NATL1A), this protein is Ribosome maturation factor RimM.